We begin with the raw amino-acid sequence, 258 residues long: Snake venom serine protease HS114 (258 aa).

A signal peptide spans 1-18 (MVLVRVVANLLILQLSYA). Residues 19–24 (QKVSEL) constitute a propeptide that is removed on maturation. One can recognise a Peptidase S1 domain in the interval 25 to 249 (VVGGDECNIN…YNTWIESVIA (225 aa)). Cystine bridges form between C31–C163, C50–C66, C98–C256, C142–C210, C174–C189, and C200–C225. N-linked (GlcNAc...) asparagine glycosylation is present at N44. Catalysis depends on charge relay system residues H65 and D110. The active-site Charge relay system is S204.

Belongs to the peptidase S1 family. Snake venom subfamily. As to quaternary structure, monomer. Post-translationally, N-glycosylated. Contains approximately 10% carbohydrates. In terms of tissue distribution, expressed by the venom gland.

Its subcellular location is the secreted. With respect to regulation, inhibited by benzamidine, PMSF, leupeptin, SDS and DTT, but not by EDTA, and commercial antivenom. Functionally, snake venom serine protease that shows non-specific action on fibrinogen. It preferentially degrades fibrinogen Aalpha (FGA), releasing fibrinopeptide A, and shows a lower activity on fibrinogen Bbeta (FGB), releasing fibrinopeptide B and other uncommon fibrinopeptides. Also shows low fibrinolytic activity compared to plasmin. Has high enzymatic activity on the substrates for activated protein C and factor XIa, and for thrombin. Shows a wide activity spectrum at different peptide sequences, with a preferential cleavage at Lys-|-Xaa over Arg-|-Xaa bonds. The polypeptide is Snake venom serine protease HS114 (Bothrops jararaca (Jararaca)).